The chain runs to 65 residues: MPKLKTRKAAAKRFRQTGTGKFTRRKANRNHLLEHKSTARKNKLSHMAIVDERDEERVSLMLPYL.

Residues 1–15 (MPKLKTRKAAAKRFR) are compositionally biased toward basic residues. The disordered stretch occupies residues 1–28 (MPKLKTRKAAAKRFRQTGTGKFTRRKAN).

Belongs to the bacterial ribosomal protein bL35 family.

The polypeptide is Large ribosomal subunit protein bL35 (Cyanothece sp. (strain PCC 7425 / ATCC 29141)).